The chain runs to 126 residues: Holo-[acyl-carrier-protein] synthase (126 aa).

Residues Asp9 and Glu58 each contribute to the Mg(2+) site.

Belongs to the P-Pant transferase superfamily. AcpS family. Requires Mg(2+) as cofactor.

The protein resides in the cytoplasm. The catalysed reaction is apo-[ACP] + CoA = holo-[ACP] + adenosine 3',5'-bisphosphate + H(+). In terms of biological role, transfers the 4'-phosphopantetheine moiety from coenzyme A to a Ser of acyl-carrier-protein. The protein is Holo-[acyl-carrier-protein] synthase of Yersinia pestis bv. Antiqua (strain Angola).